A 401-amino-acid polypeptide reads, in one-letter code: Glutamyl-tRNA reductase (401 aa).

Substrate is bound by residues 49–52, Ser92, 97–99, and Gln103; these read TCNR and END. Cys50 functions as the Nucleophile in the catalytic mechanism. 171–176 lines the NADP(+) pocket; sequence GNGKMA.

The protein belongs to the glutamyl-tRNA reductase family. Homodimer.

It carries out the reaction (S)-4-amino-5-oxopentanoate + tRNA(Glu) + NADP(+) = L-glutamyl-tRNA(Glu) + NADPH + H(+). It participates in porphyrin-containing compound metabolism; protoporphyrin-IX biosynthesis; 5-aminolevulinate from L-glutamyl-tRNA(Glu): step 1/2. Functionally, catalyzes the NADPH-dependent reduction of glutamyl-tRNA(Glu) to glutamate 1-semialdehyde (GSA). The chain is Glutamyl-tRNA reductase from Picrophilus torridus (strain ATCC 700027 / DSM 9790 / JCM 10055 / NBRC 100828 / KAW 2/3).